The following is a 376-amino-acid chain: MRLSVRKVLLAVGCALALVLAVQLGQQVLECRAVLGGVRSPRRMQPEQEELVMLGADHVEYRYGKTMPLIFVGGVPRSGTTLMRAMLDAHPEVRCGEETRIIPRVLAMRQAWTKSGREKLRLDEAGVTDEVLDAAMQAFILEVIAKHGEPARVLCNKDPFTLKSSVYLARLFPNSKFLLMVRDGRASVHSMITRKVTIAGFDLSSYRDCLTKWNKAIEVMYAQCMEVGRDKCLPVYYEQLVLHPRRSLKRILDFLGIAWSDTVLHHEDLIGKPGGVSLSKIERSTDQVIKPVNLEALSKWTGHIPRDVVRDMAQIAPMLARLGYDPYANPPNYGNPDPIVINNTHRVLKGDYKTPANLKGYFQVNQNSTSPHLGSS.

The Cytoplasmic portion of the chain corresponds to 1 to 8; sequence MRLSVRKV. Residues 9-25 traverse the membrane as a helical; Signal-anchor for type II membrane protein segment; it reads LLAVGCALALVLAVQLG. Residues 26 to 376 are Lumenal-facing; that stretch reads QQVLECRAVL…NSTSPHLGSS (351 aa). Residue 77 to 81 participates in 3'-phosphoadenylyl sulfate binding; that stretch reads RSGTT. A disulfide bridge links C95 with C155. Catalysis depends on E98, which acts as the Proton donor/acceptor. The segment at 100–104 is interaction with peptide substrate; that stretch reads RIIPR. Residues R182, S190, and R194 each coordinate 3'-phosphoadenylyl sulfate. C224 and C232 form a disulfide bridge. Residues Y237, 284-293, and K299 each bind 3'-phosphoadenylyl sulfate; that span reads STDQVIKPVN. N-linked (GlcNAc...) asparagine glycans are attached at residues N342 and N367.

Belongs to the protein sulfotransferase family. In terms of assembly, homodimer. Can also form heterodimers with TPST1. In terms of processing, N-glycosylated.

It is found in the golgi apparatus membrane. The enzyme catalyses L-tyrosyl-[protein] + 3'-phosphoadenylyl sulfate = O-sulfo-L-tyrosine-[protein] + adenosine 3',5'-bisphosphate + H(+). Its function is as follows. Catalyzes the O-sulfation of tyrosine residues within acidic motifs of polypeptides, using 3'-phosphoadenylyl sulfate (PAPS) as cosubstrate. The sequence is that of Protein-tyrosine sulfotransferase 2 (Tpst2) from Rattus norvegicus (Rat).